Consider the following 329-residue polypeptide: 4-hydroxythreonine-4-phosphate dehydrogenase (329 aa).

His-136 and Thr-137 together coordinate substrate. 3 residues coordinate a divalent metal cation: His-166, His-211, and His-266. Residues Lys-274, Asn-283, and Arg-292 each coordinate substrate.

Belongs to the PdxA family. Homodimer. Requires Zn(2+) as cofactor. It depends on Mg(2+) as a cofactor. Co(2+) serves as cofactor.

Its subcellular location is the cytoplasm. It carries out the reaction 4-(phosphooxy)-L-threonine + NAD(+) = 3-amino-2-oxopropyl phosphate + CO2 + NADH. Its pathway is cofactor biosynthesis; pyridoxine 5'-phosphate biosynthesis; pyridoxine 5'-phosphate from D-erythrose 4-phosphate: step 4/5. In terms of biological role, catalyzes the NAD(P)-dependent oxidation of 4-(phosphooxy)-L-threonine (HTP) into 2-amino-3-oxo-4-(phosphooxy)butyric acid which spontaneously decarboxylates to form 3-amino-2-oxopropyl phosphate (AHAP). The chain is 4-hydroxythreonine-4-phosphate dehydrogenase from Escherichia fergusonii (strain ATCC 35469 / DSM 13698 / CCUG 18766 / IAM 14443 / JCM 21226 / LMG 7866 / NBRC 102419 / NCTC 12128 / CDC 0568-73).